Here is a 392-residue protein sequence, read N- to C-terminus: MEAPLVSLDEEFEDLRPSCSEDPEEKPQCFYGSSPHHLEDPSLSELENFSSEIISFKSMEDLVNEFDEKLNVCFRNYNAKTENLAPVKNQLQIQEEEETLQDEEVWDALTDNYIPSLSEDWRDPNIEALNGNCSDTEIHEKEEEEFNEKSENDSGINEEPLLTADQVIEEIEEMMQNSPDPEEEEEVLEEEDGGETSSQADSVLLQEMQALTQTFNNNWSYEGLRHMSGSELTELLDQVEGAIRDFSEELVQQLARRDELEFEKEVKNSFITVLIEVQNKQKEQRELMKKRRKEKGLSLQSSRIEKGNQMPLKRFSMEGISNILQSGIRQTFGSSGTDKQYLNTVIPYEKKASPPSVEDLQMLTNILFAMKEDNEKVPTLLTDYILKVLCPT.

Residues 1–37 (MEAPLVSLDEEFEDLRPSCSEDPEEKPQCFYGSSPHH) form a disordered region. Ser-58 is modified (phosphoserine). The segment at 175 to 198 (MQNSPDPEEEEEVLEEEDGGETSS) is disordered. A compositionally biased stretch (acidic residues) spans 180–194 (DPEEEEEVLEEEDGG). A coiled-coil region spans residues 230 to 298 (SELTELLDQV…KKRRKEKGLS (69 aa)). Residues Ser-298 and Ser-316 each carry the phosphoserine modification.

Belongs to the zygin family. In terms of assembly, homodimer; disulfide-linked. May form heterodimers with FEZ2. Interacts with the NH2-terminal variable region (V1) of PKC zeta and weakly with that of PKC epsilon. Interacts with UBE4B. Interacts with SAP30L. Interacts with SCOC and ULK1; SCOC interferes with ULK1-binding to FEZ1. Directly interacts with SCOC and UVRAG. Stabilizes the interaction between SCOC and UVRAG during amino acid starvation. Post-translationally, phosphorylated by protein kinase C zeta; which enhances interaction with UBE4B and polyubiquitination. In terms of processing, polyubiquitinated in a UBE4B-dependent manner; which does not lead to proteasomal degradation and may be important for neurogenic activity. Polyubiquitin linkage seems to be mainly through Lys-26. Mainly expressed in brain.

The protein resides in the cytoplasm. It localises to the cytoskeleton. Its subcellular location is the microtubule organizing center. It is found in the centrosome. The protein localises to the cell membrane. Its function is as follows. May be involved in axonal outgrowth as component of the network of molecules that regulate cellular morphology and axon guidance machinery. Able to restore partial locomotion and axonal fasciculation to C.elegans unc-76 mutants in germline transformation experiments. May participate in the transport of mitochondria and other cargos along microtubules. The chain is Fasciculation and elongation protein zeta-1 (FEZ1) from Homo sapiens (Human).